Here is a 234-residue protein sequence, read N- to C-terminus: Zein-alpha A30 (234 aa).

Residues 1–21 form the signal peptide; sequence MAAKIFCLLMLLGLSASAATA.

It belongs to the zein family.

Functionally, zeins are major seed storage proteins. In Zea mays (Maize), this protein is Zein-alpha A30.